A 391-amino-acid polypeptide reads, in one-letter code: S-adenosylmethionine synthase (391 aa).

Histidine 14 provides a ligand contact to ATP. Mg(2+) is bound at residue aspartate 16. Glutamate 42 serves as a coordination point for K(+). L-methionine contacts are provided by glutamate 55 and glutamine 98. The flexible loop stretch occupies residues 98–108 (QSVDIAMGVDE). ATP-binding positions include 172-174 (DGK), 238-239 (RF), aspartate 247, 253-254 (RK), alanine 270, and lysine 274. Position 247 (aspartate 247) interacts with L-methionine. Position 278 (lysine 278) interacts with L-methionine.

This sequence belongs to the AdoMet synthase family. As to quaternary structure, homotetramer; dimer of dimers. The cofactor is Mg(2+). K(+) is required as a cofactor.

It localises to the cytoplasm. It carries out the reaction L-methionine + ATP + H2O = S-adenosyl-L-methionine + phosphate + diphosphate. Its pathway is amino-acid biosynthesis; S-adenosyl-L-methionine biosynthesis; S-adenosyl-L-methionine from L-methionine: step 1/1. In terms of biological role, catalyzes the formation of S-adenosylmethionine (AdoMet) from methionine and ATP. The overall synthetic reaction is composed of two sequential steps, AdoMet formation and the subsequent tripolyphosphate hydrolysis which occurs prior to release of AdoMet from the enzyme. The polypeptide is S-adenosylmethionine synthase (Clostridium botulinum (strain Kyoto / Type A2)).